Here is a 276-residue protein sequence, read N- to C-terminus: Plant cysteine oxidase 2 (276 aa).

Positions M1 to K40 are disordered. The segment covering K17–R28 has biased composition (polar residues). The span at N30–K40 shows a compositional bias: basic residues. Fe cation is bound by residues H134, H136, and H197.

It belongs to the cysteine dioxygenase family. Requires Fe(2+) as cofactor.

It localises to the nucleus. Its subcellular location is the cytoplasm. The catalysed reaction is L-cysteine + O2 = 3-sulfino-L-alanine + H(+). In terms of biological role, catalyzes the oxidation of N-terminal cysteine residues (N-Cys), thus preparing the protein for N-end rule pathway-mediated proteasomal degradation, upstream of the N-end rule enzymes ATE1, ATE2 and PRT6. Controls the preparation of the group VII ethylene response factor (ERF-VII) proteins for degradation via the 26S proteasome N-end rule pathway. Acts as an oxygen sensor that controls the stability of ERF-VII proteins, which are stabilized in flooding-induced hypoxia, and regulate transcriptional adaptation to these adverse conditions. Not active on Cys located inside or at the C-terminus of a peptide. Acts redundantly with PCO1 to repress the anaerobic response. The protein is Plant cysteine oxidase 2 of Arabidopsis thaliana (Mouse-ear cress).